We begin with the raw amino-acid sequence, 221 residues long: uncharacterized protein (221 aa).

This is an uncharacterized protein from Acanthamoeba polyphaga (Amoeba).